Here is a 346-residue protein sequence, read N- to C-terminus: Glucose-6-phosphatase 3 (346 aa).

Residues 1 to 25 (MESTLSAGIMMAEALQNQLPGLENM) lie on the Lumenal side of the membrane. The helical transmembrane segment at 26–46 (WLWVTFLADPKNLFQFYFPAV) threads the bilayer. Topologically, residues 47 to 56 (YYASRRLGIS) are cytoplasmic. The helical transmembrane segment at 57–77 (LFWIAFITEWLNLVFKWFLFG) threads the bilayer. Residues 78 to 115 (DRPFWWVHESGYSAQTPVQIHQFPSSCETGPGSPSGHC) lie on the Lumenal side of the membrane. Arg79 contacts substrate. His114 serves as the catalytic Proton donor. A helical transmembrane segment spans residues 116-135 (MITGAALWPVMIAISSQVAS). At 136–140 (QTRSP) the chain is on the cytoplasmic side. The helical transmembrane segment at 141–162 (WVRVIPGLAYCTFLLAVGLSRV) threads the bilayer. Residue Arg161 coordinates substrate. Residues 163-167 (FLLAH) lie on the Lumenal side of the membrane. Residue His167 is the Nucleophile of the active site. The helical transmembrane segment at 168–186 (FPHQVLAGLLAGVILGWLL) threads the bilayer. The Cytoplasmic portion of the chain corresponds to 187-197 (SPRVPMERELS). Residues 198–218 (FYGLTALTLMLGASLMYWTLF) form a helical membrane-spanning segment. The Lumenal segment spans residues 219 to 254 (TLGLDLSWSINLASKWCDRPEWVLVDSRPFASLSRD). A helical transmembrane segment spans residues 255-273 (SGSALGLGIALHTPCYAQI). At 274-283 (RRVHLGNGQK) the chain is on the cytoplasmic side. Residues 284 to 304 (IACFVLAMGLLVFLEWLGHPP) traverse the membrane as a helical segment. At 305-307 (QIS) the chain is on the lumenal side. Residues 308–328 (LFYIFNFLKFTLWPCLVVALV) traverse the membrane as a helical segment. Residues 329–346 (PWMVHTLSAQEAPPIRSS) are Cytoplasmic-facing.

It belongs to the glucose-6-phosphatase family. Expressed in liver and kidney. It is the major glucose-6-phosphatase expressed in the small intestine.

It localises to the endoplasmic reticulum membrane. It catalyses the reaction D-glucose 6-phosphate + H2O = D-glucose + phosphate. It participates in carbohydrate biosynthesis; gluconeogenesis. With respect to regulation, inhibited by vanadate. Hydrolyzes glucose-6-phosphate to glucose in the endoplasmic reticulum. May form with the glucose-6-phosphate transporter (SLC37A4/G6PT) a ubiquitously expressed complex responsible for glucose production through glycogenolysis and gluconeogenesis. Probably required for normal neutrophil function. The polypeptide is Glucose-6-phosphatase 3 (G6pc3) (Rattus norvegicus (Rat)).